The primary structure comprises 401 residues: Phosphoglycerate kinase, cytosolic (401 aa).

Val24, Asp25, Asn27, Arg41, Ser63, His64, Gly66, Arg67, Arg122, His154, and Arg155 together coordinate (2R)-3-phosphoglycerate. Residue Gly200 coordinates ADP. CDP is bound at residue Gly200. Residues Lys202 and Lys206 each contribute to the AMP site. Lys206 is a binding site for ATP. Residue Gly224 coordinates ADP. Residue Gly224 coordinates CDP. Gly225 and Gly297 together coordinate AMP. Gly225 and Gly297 together coordinate ATP. Positions 322 and 327 each coordinate CDP. Phe327 is a binding site for ADP. Position 328 (Glu328) interacts with AMP. The ATP site is built by Glu328, Asp359, and Ser360. Asp359 is a binding site for Mg(2+).

This sequence belongs to the phosphoglycerate kinase family. In terms of assembly, monomer. Mg(2+) serves as cofactor.

It is found in the cytoplasm. It carries out the reaction (2R)-3-phosphoglycerate + ATP = (2R)-3-phospho-glyceroyl phosphate + ADP. It participates in carbohydrate degradation; glycolysis; pyruvate from D-glyceraldehyde 3-phosphate: step 2/5. The polypeptide is Phosphoglycerate kinase, cytosolic (Nicotiana tabacum (Common tobacco)).